Here is a 288-residue protein sequence, read N- to C-terminus: Probable branched-chain-amino-acid aminotransferase (288 aa).

N6-(pyridoxal phosphate)lysine is present on Lys153.

It belongs to the class-IV pyridoxal-phosphate-dependent aminotransferase family. The cofactor is pyridoxal 5'-phosphate.

It carries out the reaction L-leucine + 2-oxoglutarate = 4-methyl-2-oxopentanoate + L-glutamate. The catalysed reaction is L-isoleucine + 2-oxoglutarate = (S)-3-methyl-2-oxopentanoate + L-glutamate. It catalyses the reaction L-valine + 2-oxoglutarate = 3-methyl-2-oxobutanoate + L-glutamate. It participates in amino-acid biosynthesis; L-isoleucine biosynthesis; L-isoleucine from 2-oxobutanoate: step 4/4. The protein operates within amino-acid biosynthesis; L-leucine biosynthesis; L-leucine from 3-methyl-2-oxobutanoate: step 4/4. It functions in the pathway amino-acid biosynthesis; L-valine biosynthesis; L-valine from pyruvate: step 4/4. Acts on leucine, isoleucine and valine. The sequence is that of Probable branched-chain-amino-acid aminotransferase (ilvE) from Rickettsia typhi (strain ATCC VR-144 / Wilmington).